A 121-amino-acid chain; its full sequence is Large ribosomal subunit protein uL14c (121 aa).

The protein belongs to the universal ribosomal protein uL14 family. As to quaternary structure, part of the 50S ribosomal subunit.

The protein localises to the plastid. Its subcellular location is the apicoplast. Functionally, binds to 23S rRNA. In Toxoplasma gondii, this protein is Large ribosomal subunit protein uL14c (rpl14).